Here is a 378-residue protein sequence, read N- to C-terminus: Metalloendoproteinase 2-MMP (378 aa).

An N-terminal signal peptide occupies residues 1 to 20; sequence MRFCVFGFLSLFLIVSPASA. Residues 21 to 154 constitute a propeptide, activation peptide; sequence WFFPNSTAVP…SRTHLHAVKR (134 aa). 5 N-linked (GlcNAc...) asparagine glycosylation sites follow: N25, N35, N46, N79, and N102. Residues 118–125 carry the Cysteine switch motif; that stretch reads PRCGNPDV. C120 contacts Zn(2+). 3 N-linked (GlcNAc...) asparagine glycosylation sites follow: N127, N143, and N203. H280 is a binding site for Zn(2+). E281 is a catalytic residue. Positions 284 and 290 each coordinate Zn(2+). N-linked (GlcNAc...) asparagine glycosylation occurs at N330. S349 carries GPI-anchor amidated serine lipidation. Residues 350–378 constitute a propeptide, removed in mature form; it reads AAWRIDGSSRSTIVSLLLSTVGLVLWFLP.

This sequence belongs to the peptidase M10A family. Matrix metalloproteinases (MMPs) subfamily. Zn(2+) serves as cofactor. In terms of tissue distribution, mostly expressed in roots, and, to a lower extent, in flowers, leaves and stems.

It is found in the cell membrane. Its activity is regulated as follows. Repressed by acetohydroxamic acid (AHA). Its function is as follows. Matrix metalloproteinases (MMPs) or matrixins may play a role in the degradation and remodeling of the extracellular matrix (ECM) during development or in response to stresses. Required for plant growth, morphogenesis, and development with particular relevance for flowering and senescence. Active on McaPLGLDpaAR-NH(2) (QF24) and myelin basic protein (MBP) and, to some extent, on beta-casein. The chain is Metalloendoproteinase 2-MMP from Arabidopsis thaliana (Mouse-ear cress).